The sequence spans 600 residues: Sulfite reductase [NADPH] flavoprotein alpha-component (600 aa).

The Flavodoxin-like domain occupies 63-201; sequence ITLISASQTG…AAQAWRQRVV (139 aa). FMN contacts are provided by residues 69-74, 116-119, and 152-161; these read SQTGNA, STQG, and LGDTSYEHFC. Residues 235–449 form the FAD-binding FR-type domain; it reads ESPLTATLSV…IEHNDNFRLP (215 aa). FAD-binding positions include Thr-323, Ala-357, 387–390, 405–407, and 420–423; these read RLYS, TVG, and GGAS. Residues 520-521, 526-530, and Asp-562 contribute to the NADP(+) site; these read SR and KIYVQ. Tyr-600 is a binding site for FAD.

This sequence belongs to the NADPH-dependent sulphite reductase flavoprotein subunit CysJ family. It in the N-terminal section; belongs to the flavodoxin family. In the C-terminal section; belongs to the flavoprotein pyridine nucleotide cytochrome reductase family. Alpha(8)-beta(8). The alpha component is a flavoprotein, the beta component is a hemoprotein. FAD serves as cofactor. FMN is required as a cofactor.

It carries out the reaction hydrogen sulfide + 3 NADP(+) + 3 H2O = sulfite + 3 NADPH + 4 H(+). It functions in the pathway sulfur metabolism; hydrogen sulfide biosynthesis; hydrogen sulfide from sulfite (NADPH route): step 1/1. Functionally, component of the sulfite reductase complex that catalyzes the 6-electron reduction of sulfite to sulfide. This is one of several activities required for the biosynthesis of L-cysteine from sulfate. The flavoprotein component catalyzes the electron flow from NADPH -&gt; FAD -&gt; FMN to the hemoprotein component. This Cronobacter sakazakii (strain ATCC BAA-894) (Enterobacter sakazakii) protein is Sulfite reductase [NADPH] flavoprotein alpha-component.